Here is a 173-residue protein sequence, read N- to C-terminus: Lens fiber membrane intrinsic protein (173 aa).

Topologically, residues 1–3 (MYS) are cytoplasmic. Residues 4 to 24 (FMGGGLFCAWVGTILLVVATA) traverse the membrane as a helical segment. The Extracellular portion of the chain corresponds to 25 to 66 (TDHWMQYRLSGSFAHQGLWRYCLGNKCFLQTESIAYWNATRA). 2 C-linked (Man) tryptophan glycosylation sites follow: tryptophan 43 and tryptophan 61. Asparagine 62 is a glycosylation site (N-linked (GlcNAc...) asparagine). The helical transmembrane segment at 67 to 87 (FMILSALCATSGIIMGVLAFA) threads the bilayer. Residues 88–98 (QQSTFTRLSRP) lie on the Cytoplasmic side of the membrane. The chain crosses the membrane as a helical span at residues 99–119 (FSAGIMFFASTLFVLLALAIY). Residues 120–140 (TGVTVSFLGRRFGDWRFSWSY) are Extracellular-facing. A helical transmembrane segment spans residues 141–161 (ILGWVALLMTFFAGIFYMCAY). At 162-173 (RMHECRRLATPR) the chain is on the cytoplasmic side. The residue at position 171 (threonine 171) is a Phosphothreonine.

It belongs to the PMP-22/EMP/MP20 family. As to quaternary structure, seems to be associated with itself or another lens membrane component via disulfide bonds.

It is found in the membrane. Functionally, present in the thicker 16-17 nm junctions of mammalian lens fiber cells, where it may contribute to cell junctional organization. Acts as a receptor for calmodulin. May play an important role in both lens development and cataractogenesis. The polypeptide is Lens fiber membrane intrinsic protein (Lim2) (Mus musculus (Mouse)).